The following is a 247-amino-acid chain: Ribonuclease 3 (247 aa).

Residues 21-149 form the RNase III domain; it reads VDHQPLLDHL…LFGAIFRQHG (129 aa). Residue Glu-62 coordinates Mg(2+). The active site involves Asp-66. Residues Asp-135 and Glu-138 each contribute to the Mg(2+) site. The active site involves Glu-138. Positions 176–244 constitute a DRBM domain; that stretch reads DWKTTLQEEL…AHQAFRKLRE (69 aa).

This sequence belongs to the ribonuclease III family. In terms of assembly, homodimer. Requires Mg(2+) as cofactor.

It is found in the cytoplasm. It carries out the reaction Endonucleolytic cleavage to 5'-phosphomonoester.. In terms of biological role, digests double-stranded RNA. Involved in the processing of primary rRNA transcript to yield the immediate precursors to the large and small rRNAs (23S and 16S). Processes some mRNAs, and tRNAs when they are encoded in the rRNA operon. Processes pre-crRNA and tracrRNA of type II CRISPR loci if present in the organism. The polypeptide is Ribonuclease 3 (Corynebacterium glutamicum (strain ATCC 13032 / DSM 20300 / JCM 1318 / BCRC 11384 / CCUG 27702 / LMG 3730 / NBRC 12168 / NCIMB 10025 / NRRL B-2784 / 534)).